The sequence spans 201 residues: Large ribosomal subunit protein uL4 (201 aa).

The interval 44–68 is disordered; sequence KAQKTRSEVAGTTKKSKKQKGGGAR.

The protein belongs to the universal ribosomal protein uL4 family. Part of the 50S ribosomal subunit.

Its function is as follows. One of the primary rRNA binding proteins, this protein initially binds near the 5'-end of the 23S rRNA. It is important during the early stages of 50S assembly. It makes multiple contacts with different domains of the 23S rRNA in the assembled 50S subunit and ribosome. Functionally, forms part of the polypeptide exit tunnel. The chain is Large ribosomal subunit protein uL4 from Xanthomonas oryzae pv. oryzae (strain MAFF 311018).